The following is a 1119-amino-acid chain: Nuclear matrix constituent protein 1 (1119 aa).

Coiled-coil stretches lie at residues 140-226 (LAEL…LYQQ) and 328-488 (LQNR…LDER). Disordered regions lie at residues 846–884 (LDVE…AEEA), 903–974 (LASA…PTGR), 989–1015 (NGAL…EIPD), and 1046–1109 (GINA…EVSM). 2 stretches are compositionally biased toward basic residues: residues 859–876 (GNRK…RKRS) and 920–929 (KRTRNSRKRN). A compositionally biased stretch (polar residues) spans 1075–1085 (TPEQSRGYQNQ).

The protein belongs to the CRWN family.

Its subcellular location is the nucleus matrix. It localises to the nucleus lamina. Its function is as follows. Architectural component of nuclear structure that plays different roles in controlling nuclear size and morphology. The sequence is that of Nuclear matrix constituent protein 1 from Daucus carota subsp. sativus (Carrot).